Reading from the N-terminus, the 505-residue chain is MSAKIKVDEISSIIKERIENFELNINIEETGKVVNVADGVASVYGLKNVMANEMVEFENGVKGLALNLEENSVGVVILGSISGIVEGTSVKRLGKLLRVPVGDALIGRVVNALGEPIDAKGPIEYSETRFVEEKAKGIMARKSVHEPLQTGLKAIDALVPIGRGQRELIIGDRQTGKTTVAVDTIINQKGQDVICIYVAIGQKQSTVAQVVKKLEEYGAMDYTIVVSAGASEPAALQYLAPYAGCTMGEYFRDNSRHALIIYDDLSKHAVAYREMSLILRRPPGREAYPGDVFYLHSRLLERASKLSDELGAGSLTALPIIETQAGDVSAYIPTNVISITDGQIFLESGLFNSGIRPAINVGLSVSRVGGSAQIKAIKKVSGTLRLDLAQYRELQAFAQFASDLDESSRKQLDRGQRMVEILKQPPYSPLPVENQIVIIFAGSRGFLDDIPVSAIGKFENELYSFIEAKYPNIFEDIRTKKTIEKDLEENLAKALNDFKMTFSVK.

ATP is bound at residue 171–178; that stretch reads GDRQTGKT.

Belongs to the ATPase alpha/beta chains family. As to quaternary structure, F-type ATPases have 2 components, CF(1) - the catalytic core - and CF(0) - the membrane proton channel. CF(1) has five subunits: alpha(3), beta(3), gamma(1), delta(1), epsilon(1). CF(0) has three main subunits: a(1), b(2) and c(9-12). The alpha and beta chains form an alternating ring which encloses part of the gamma chain. CF(1) is attached to CF(0) by a central stalk formed by the gamma and epsilon chains, while a peripheral stalk is formed by the delta and b chains.

It is found in the cell inner membrane. It carries out the reaction ATP + H2O + 4 H(+)(in) = ADP + phosphate + 5 H(+)(out). Functionally, produces ATP from ADP in the presence of a proton gradient across the membrane. The alpha chain is a regulatory subunit. The protein is ATP synthase subunit alpha of Campylobacter hominis (strain ATCC BAA-381 / DSM 21671 / CCUG 45161 / LMG 19568 / NCTC 13146 / CH001A).